Consider the following 426-residue polypeptide: Serine--tRNA ligase (426 aa).

229 to 231 is a binding site for L-serine; it reads TAE. Residue 260 to 262 coordinates ATP; that stretch reads RSE. E283 is a binding site for L-serine. 347 to 350 contacts ATP; the sequence is EIAS. Position 383 (S383) interacts with L-serine.

The protein belongs to the class-II aminoacyl-tRNA synthetase family. Type-1 seryl-tRNA synthetase subfamily. Homodimer. The tRNA molecule binds across the dimer.

The protein resides in the cytoplasm. The catalysed reaction is tRNA(Ser) + L-serine + ATP = L-seryl-tRNA(Ser) + AMP + diphosphate + H(+). It catalyses the reaction tRNA(Sec) + L-serine + ATP = L-seryl-tRNA(Sec) + AMP + diphosphate + H(+). It participates in aminoacyl-tRNA biosynthesis; selenocysteinyl-tRNA(Sec) biosynthesis; L-seryl-tRNA(Sec) from L-serine and tRNA(Sec): step 1/1. In terms of biological role, catalyzes the attachment of serine to tRNA(Ser). Is also able to aminoacylate tRNA(Sec) with serine, to form the misacylated tRNA L-seryl-tRNA(Sec), which will be further converted into selenocysteinyl-tRNA(Sec). The polypeptide is Serine--tRNA ligase (Rickettsia bellii (strain RML369-C)).